The following is a 496-amino-acid chain: Maturase K (496 aa).

Belongs to the intron maturase 2 family. MatK subfamily.

It localises to the plastid. Its subcellular location is the chloroplast. Usually encoded in the trnK tRNA gene intron. Probably assists in splicing its own and other chloroplast group II introns. The sequence is that of Maturase K from Paeonia officinalis (Common peony).